A 2344-amino-acid chain; its full sequence is Peroxide stress-activated histidine kinase mak3 (2344 aa).

The region spanning 1-295 is the Protein kinase domain; it reads MYSQHELRNK…GIVNDLEACL (295 aa). 3 positions are modified to phosphoserine: serine 12, serine 16, and serine 17. The span at 486 to 503 shows a compositional bias: polar residues; the sequence is SGNTRKTSLLGSNHSSYS. The interval 486–506 is disordered; it reads SGNTRKTSLLGSNHSSYSDKL. TPR repeat units lie at residues 829–862 and 1340–1373; these read CHYL…IPHE and AFAF…YAAL. The PAC domain occupies 1730-1781; sequence FELEIRIKRKDGVYRWNLTRCTPTTNEKNRTSFLCATIDIDDQKKARATALE. One can recognise a Histidine kinase domain in the interval 1792 to 2018; that stretch reads NISHELRTPF…TFKICYDLKI (227 aa). Residue histidine 1795 is modified to Phosphohistidine; by autocatalysis. In terms of domain architecture, Response regulatory spans 2211–2333; sequence KILIAEDNPI…TLIKMLLQYL (123 aa). Aspartate 2263 carries the 4-aspartylphosphate modification.

It is found in the cytoplasm. The catalysed reaction is ATP + protein L-histidine = ADP + protein N-phospho-L-histidine.. Its function is as follows. Involved in the control of the SAPK-dependent transcriptional response to peroxide stress. Regulates sty1 activity. This Schizosaccharomyces pombe (strain 972 / ATCC 24843) (Fission yeast) protein is Peroxide stress-activated histidine kinase mak3 (mak3).